A 546-amino-acid polypeptide reads, in one-letter code: MKILFATLLVVTTPHLVTGQIHWGNLSKIGVVGTGSASYKVMTQSSHQTLVIKLMPNITAIDNCTKTEIEEYKRLLGTVLQPIKVALNAITKNIKPIKSSTTSRRHRRFAGVALAGAALGVATAAQITAGIALHQSMMNTQAIESLKASLETTNQAIEEIRQAGQEMILAVQGVQDYINNELVPAMGQLSCDIVGQKLGLKLLRYYTEILSLFGPSLRDPISAEISIQALSYALGGDINKILEKLGYSGSDLLAILESKGIKAKITYVDIESYFIVLSIAYPSLSEIKGVIIHRLEGVSYNIGSQEWYTTVPRYVATQGYLISNFDDTPCAFSPEGTICSQNALYPMSPLLQECFRGSTRSCARTLVSGSIGNRFILSKGNLIANCASILCKCYTTGSIISQDPDKILTYIAADQCPIVEVDGVTIQVGSREYPDAVYLHKIDLGPPISLEKLDVGTNLGNAVTKLEKAKDLLDSSDLILETIKGASVTNTGHILVGAGLIAVVGILIVTCCCRKRSNDSKVSTVILNPGLKPDLTGTSKSYVRSL.

A signal peptide spans M1 to G19. Residues Q20–T491 lie on the Extracellular side of the membrane. N-linked (GlcNAc...) asparagine; by host glycans are attached at residues N25, N57, and N63. The interval F109–L133 is fusion peptide. Positions H134–Q162 form a coiled coil. 4 disulfides stabilise this stretch: C330/C339, C354/C362, C386/C391, and C393/C416. Residues N458–I483 are a coiled coil. A helical transmembrane segment spans residues G492–C512. Topologically, residues C513–L546 are cytoplasmic.

The protein belongs to the paramyxoviruses fusion glycoprotein family. As to quaternary structure, homotrimer of disulfide-linked F1-F2. In terms of processing, the inactive precursor F0 is glycosylated and proteolytically cleaved into F1 and F2 to be functionally active. The cleavage is mediated by cellular proteases during the transport and maturation of the polypeptide.

Its subcellular location is the virion membrane. The protein resides in the host cell membrane. Functionally, class I viral fusion protein. Under the current model, the protein has at least 3 conformational states: pre-fusion native state, pre-hairpin intermediate state, and post-fusion hairpin state. During viral and plasma cell membrane fusion, the heptad repeat (HR) regions assume a trimer-of-hairpins structure, positioning the fusion peptide in close proximity to the C-terminal region of the ectodomain. The formation of this structure appears to drive apposition and subsequent fusion of viral and plasma cell membranes. Directs fusion of viral and cellular membranes leading to delivery of the nucleocapsid into the cytoplasm. This fusion is pH independent and occurs directly at the outer cell membrane. The trimer of F1-F2 (F protein) probably interacts with HN at the virion surface. Upon HN binding to its cellular receptor, the hydrophobic fusion peptide is unmasked and interacts with the cellular membrane, inducing the fusion between cell and virion membranes. Later in infection, F proteins expressed at the plasma membrane of infected cells could mediate fusion with adjacent cells to form syncytia, a cytopathic effect that could lead to tissue necrosis. This chain is Fusion glycoprotein F0 (F), found in Rinderpest virus (strain RBOK) (RDV).